The chain runs to 503 residues: Glutamate--tRNA ligase (503 aa).

The 'HIGH' region motif lies at 15 to 25 (PSPTGYLHVGG). Positions 262-266 (KLSKR) match the 'KMSKS' region motif. K265 provides a ligand contact to ATP.

The protein belongs to the class-I aminoacyl-tRNA synthetase family. Glutamate--tRNA ligase type 1 subfamily. Monomer.

It is found in the cytoplasm. It catalyses the reaction tRNA(Glu) + L-glutamate + ATP = L-glutamyl-tRNA(Glu) + AMP + diphosphate. Functionally, catalyzes the attachment of glutamate to tRNA(Glu) in a two-step reaction: glutamate is first activated by ATP to form Glu-AMP and then transferred to the acceptor end of tRNA(Glu). The protein is Glutamate--tRNA ligase of Prosthecochloris aestuarii (strain DSM 271 / SK 413).